The following is a 599-amino-acid chain: Elongation factor 4 (599 aa).

Residues 5-187 (SHIRNFSIIA…RLVQSIPAPE (183 aa)) form the tr-type G domain. Residues 17–22 (DHGKST) and 134–137 (NKMD) each bind GTP.

It belongs to the TRAFAC class translation factor GTPase superfamily. Classic translation factor GTPase family. LepA subfamily.

Its subcellular location is the cell inner membrane. It catalyses the reaction GTP + H2O = GDP + phosphate + H(+). Required for accurate and efficient protein synthesis under certain stress conditions. May act as a fidelity factor of the translation reaction, by catalyzing a one-codon backward translocation of tRNAs on improperly translocated ribosomes. Back-translocation proceeds from a post-translocation (POST) complex to a pre-translocation (PRE) complex, thus giving elongation factor G a second chance to translocate the tRNAs correctly. Binds to ribosomes in a GTP-dependent manner. In Pseudomonas entomophila (strain L48), this protein is Elongation factor 4.